The sequence spans 410 residues: Cysteine desulfurase IscS (410 aa).

Residues Ala-79–Thr-80, Asn-159, Gln-187, and Ser-207–His-209 contribute to the pyridoxal 5'-phosphate site. Position 210 is an N6-(pyridoxal phosphate)lysine (Lys-210). Residue Thr-248 coordinates pyridoxal 5'-phosphate. Cys-334 serves as the catalytic Cysteine persulfide intermediate. Cys-334 contacts [2Fe-2S] cluster.

Belongs to the class-V pyridoxal-phosphate-dependent aminotransferase family. NifS/IscS subfamily. As to quaternary structure, homodimer. Forms a heterotetramer with IscU, interacts with other sulfur acceptors. It depends on pyridoxal 5'-phosphate as a cofactor.

The protein resides in the cytoplasm. It carries out the reaction (sulfur carrier)-H + L-cysteine = (sulfur carrier)-SH + L-alanine. It participates in cofactor biosynthesis; iron-sulfur cluster biosynthesis. In terms of biological role, master enzyme that delivers sulfur to a number of partners involved in Fe-S cluster assembly, tRNA modification or cofactor biosynthesis. Catalyzes the removal of elemental sulfur atoms from cysteine to produce alanine. Functions as a sulfur delivery protein for Fe-S cluster synthesis onto IscU, an Fe-S scaffold assembly protein, as well as other S acceptor proteins. The polypeptide is Cysteine desulfurase IscS (Ehrlichia chaffeensis (strain ATCC CRL-10679 / Arkansas)).